The following is a 339-amino-acid chain: NADH-quinone oxidoreductase subunit H (339 aa).

9 helical membrane passes run 9-29 (IFPLIIIALKVVAITIPLILC), 50-70 (PNVVGPFGLLQPIADAVKLLF), 82-102 (ILFILAPMITFILSLIGWAVI), 115-135 (VGVLYILAISSLSVYGIIIAG), 161-181 (MGLVIITVLLTTGTLNLSEII), 187-207 (MPWWIDLMLLPMGVVFFISVL), 235-255 (MGFALFFLGEYANMILVSAMT), 275-295 (IPGFFWFVFKVGFLLFCFLWI), and 311-331 (GWKVFLPLTLFWVVLVSSVLV).

It belongs to the complex I subunit 1 family. As to quaternary structure, NDH-1 is composed of 14 different subunits. Subunits NuoA, H, J, K, L, M, N constitute the membrane sector of the complex.

It is found in the cell membrane. The catalysed reaction is a quinone + NADH + 5 H(+)(in) = a quinol + NAD(+) + 4 H(+)(out). Its function is as follows. NDH-1 shuttles electrons from NADH, via FMN and iron-sulfur (Fe-S) centers, to quinones in the respiratory chain. The immediate electron acceptor for the enzyme in this species is believed to be ubiquinone. Couples the redox reaction to proton translocation (for every two electrons transferred, four hydrogen ions are translocated across the cytoplasmic membrane), and thus conserves the redox energy in a proton gradient. This subunit may bind ubiquinone. The sequence is that of NADH-quinone oxidoreductase subunit H from Rickettsia africae (strain ESF-5).